Consider the following 437-residue polypeptide: GTPase Der (437 aa).

2 consecutive EngA-type G domains span residues 4 to 167 (PVIA…PEDE) and 176 to 351 (IRIS…ENHN). Residues 10-17 (GRPNVGKS), 57-61 (DTGGI), 119-122 (NKID), 182-189 (GRPNVGKS), 229-233 (DTAGM), and 294-297 (NKWD) contribute to the GTP site. The region spanning 352 to 436 (LRVPTHVLND…PIKIIARKKN (85 aa)) is the KH-like domain.

This sequence belongs to the TRAFAC class TrmE-Era-EngA-EngB-Septin-like GTPase superfamily. EngA (Der) GTPase family. In terms of assembly, associates with the 50S ribosomal subunit.

Its function is as follows. GTPase that plays an essential role in the late steps of ribosome biogenesis. This Halalkalibacterium halodurans (strain ATCC BAA-125 / DSM 18197 / FERM 7344 / JCM 9153 / C-125) (Bacillus halodurans) protein is GTPase Der.